Here is a 407-residue protein sequence, read N- to C-terminus: Probable tRNA sulfurtransferase (407 aa).

The region spanning 61 to 165 (NEITYRLSKI…LDAIYMYEEV (105 aa)) is the THUMP domain. ATP is bound by residues 183–184 (ML), 208–209 (HF), Arg265, Gly287, and Gln296.

The protein belongs to the ThiI family.

Its subcellular location is the cytoplasm. The catalysed reaction is [ThiI sulfur-carrier protein]-S-sulfanyl-L-cysteine + a uridine in tRNA + 2 reduced [2Fe-2S]-[ferredoxin] + ATP + H(+) = [ThiI sulfur-carrier protein]-L-cysteine + a 4-thiouridine in tRNA + 2 oxidized [2Fe-2S]-[ferredoxin] + AMP + diphosphate. It catalyses the reaction [ThiS sulfur-carrier protein]-C-terminal Gly-Gly-AMP + S-sulfanyl-L-cysteinyl-[cysteine desulfurase] + AH2 = [ThiS sulfur-carrier protein]-C-terminal-Gly-aminoethanethioate + L-cysteinyl-[cysteine desulfurase] + A + AMP + 2 H(+). It participates in cofactor biosynthesis; thiamine diphosphate biosynthesis. Functionally, catalyzes the ATP-dependent transfer of a sulfur to tRNA to produce 4-thiouridine in position 8 of tRNAs, which functions as a near-UV photosensor. Also catalyzes the transfer of sulfur to the sulfur carrier protein ThiS, forming ThiS-thiocarboxylate. This is a step in the synthesis of thiazole, in the thiamine biosynthesis pathway. The sulfur is donated as persulfide by IscS. The protein is Probable tRNA sulfurtransferase of Staphylococcus aureus (strain MSSA476).